A 212-amino-acid chain; its full sequence is Small ribosomal subunit protein eS6 (212 aa).

It belongs to the eukaryotic ribosomal protein eS6 family.

This Metallosphaera sedula (strain ATCC 51363 / DSM 5348 / JCM 9185 / NBRC 15509 / TH2) protein is Small ribosomal subunit protein eS6.